Consider the following 309-residue polypeptide: 2-phospho-L-lactate transferase (309 aa).

Asp50 and Lys89 together coordinate 7,8-didemethyl-8-hydroxy-5-deazariboflavin.

Belongs to the CofD family. Homodimer. Requires Mg(2+) as cofactor.

The enzyme catalyses (2S)-lactyl-2-diphospho-5'-guanosine + 7,8-didemethyl-8-hydroxy-5-deazariboflavin = oxidized coenzyme F420-0 + GMP + H(+). The protein operates within cofactor biosynthesis; coenzyme F420 biosynthesis. Its function is as follows. Catalyzes the transfer of the 2-phospholactate moiety from (2S)-lactyl-2-diphospho-5'-guanosine to 7,8-didemethyl-8-hydroxy-5-deazariboflavin (FO) with the formation of oxidized coenzyme F420-0 and GMP. The sequence is that of 2-phospho-L-lactate transferase from Methanococcus maripaludis (strain C5 / ATCC BAA-1333).